The primary structure comprises 152 residues: MIYYVIALFVIAIDQISKWLIVKNMELGTSIPIIDNVLYITSHRNRGAAWGILENKMWFFYIITVVFVVFIVFYMKKYAKTDKLLGISLGLILGGAIGNFIDRVFRQEVVDFIHVYIFSYNYPVFNIADSALCIGVVLIIIQTLLEGKKAKE.

The next 2 helical transmembrane spans lie at Asn55 to Met75 and Leu85 to Phe105. Residues Asp111 and Asp129 contribute to the active site. The helical transmembrane segment at Val124–Leu144 threads the bilayer.

This sequence belongs to the peptidase A8 family.

It localises to the cell membrane. The enzyme catalyses Release of signal peptides from bacterial membrane prolipoproteins. Hydrolyzes -Xaa-Yaa-Zaa-|-(S,diacylglyceryl)Cys-, in which Xaa is hydrophobic (preferably Leu), and Yaa (Ala or Ser) and Zaa (Gly or Ala) have small, neutral side chains.. It functions in the pathway protein modification; lipoprotein biosynthesis (signal peptide cleavage). Its function is as follows. This protein specifically catalyzes the removal of signal peptides from prolipoproteins. The chain is Lipoprotein signal peptidase from Bacillus cereus (strain G9842).